Consider the following 176-residue polypeptide: Large ribosomal subunit protein bL17 (176 aa).

A disordered region spans residues 124–176; that stretch reads AAPKAARQDRSKRVKGSRKTEASAAKAAPAAQAAPELPAESDAPAAEAAPTEE. Over residues 145-176 the composition is skewed to low complexity; that stretch reads ASAAKAAPAAQAAPELPAESDAPAAEAAPTEE.

It belongs to the bacterial ribosomal protein bL17 family. Part of the 50S ribosomal subunit. Contacts protein L32.

This chain is Large ribosomal subunit protein bL17, found in Chlorobium phaeovibrioides (strain DSM 265 / 1930) (Prosthecochloris vibrioformis (strain DSM 265)).